A 201-amino-acid chain; its full sequence is Thymidylate kinase (201 aa).

Residue 7 to 14 (GGEGSGKT) coordinates ATP.

The protein belongs to the thymidylate kinase family.

It catalyses the reaction dTMP + ATP = dTDP + ADP. Its function is as follows. Phosphorylation of dTMP to form dTDP in both de novo and salvage pathways of dTTP synthesis. This chain is Thymidylate kinase, found in Acholeplasma laidlawii (strain PG-8A).